A 371-amino-acid chain; its full sequence is MPEQPIAVAMSGGVDSSVVAAMLVREGRTVVGMTMQLWNQRRLPELAVEGATTGRCCSLDDVYDARRVAEQVGIPYYVVNFEEQFEEHVVKPFVDEYLAGRTPIPCTLCNNYIKFDRFLEMADSVGAYHMATGHYARIRHDEATGRYQLLRAVDDSKDQTYFLFGLTQAQLARTLFPLGELNKPEVRDMARSMDLAVAAKGDSQEICFVPNGDYAAFMSAYLKEKGVAVEETSGEIVTTDGRTLGRHEGVHRFTVGQRKGLGVATGEPLYVISTNPANHQVVVGGNDDLLRGGFTAKDVNWISIAGVEPGAPVRAQVKIRNRHAAAPARLVATSDRDRVEVVFDEAQRAVTPGQGAVFYAGDLVLGGGWIE.

ATP is bound by residues 9-16 (AMSGGVDS) and M35. C109 acts as the Nucleophile in catalysis. Residues C109 and C207 are joined by a disulfide bond. G133 is an ATP binding site. Residues 157 to 159 (KDQ) are interaction with tRNA. C207 functions as the Cysteine persulfide intermediate in the catalytic mechanism.

It belongs to the MnmA/TRMU family.

The protein localises to the cytoplasm. It catalyses the reaction S-sulfanyl-L-cysteinyl-[protein] + uridine(34) in tRNA + AH2 + ATP = 2-thiouridine(34) in tRNA + L-cysteinyl-[protein] + A + AMP + diphosphate + H(+). Catalyzes the 2-thiolation of uridine at the wobble position (U34) of tRNA, leading to the formation of s(2)U34. This Solibacter usitatus (strain Ellin6076) protein is tRNA-specific 2-thiouridylase MnmA.